Consider the following 155-residue polypeptide: SsrA-binding protein (155 aa).

Belongs to the SmpB family.

The protein resides in the cytoplasm. Functionally, required for rescue of stalled ribosomes mediated by trans-translation. Binds to transfer-messenger RNA (tmRNA), required for stable association of tmRNA with ribosomes. tmRNA and SmpB together mimic tRNA shape, replacing the anticodon stem-loop with SmpB. tmRNA is encoded by the ssrA gene; the 2 termini fold to resemble tRNA(Ala) and it encodes a 'tag peptide', a short internal open reading frame. During trans-translation Ala-aminoacylated tmRNA acts like a tRNA, entering the A-site of stalled ribosomes, displacing the stalled mRNA. The ribosome then switches to translate the ORF on the tmRNA; the nascent peptide is terminated with the 'tag peptide' encoded by the tmRNA and targeted for degradation. The ribosome is freed to recommence translation, which seems to be the essential function of trans-translation. The chain is SsrA-binding protein from Halothermothrix orenii (strain H 168 / OCM 544 / DSM 9562).